The chain runs to 176 residues: Endoribonuclease YbeY (176 aa).

The Zn(2+) site is built by histidine 139, histidine 143, and histidine 149.

Belongs to the endoribonuclease YbeY family. Zn(2+) is required as a cofactor.

Its subcellular location is the cytoplasm. Its function is as follows. Single strand-specific metallo-endoribonuclease involved in late-stage 70S ribosome quality control and in maturation of the 3' terminus of the 16S rRNA. The sequence is that of Endoribonuclease YbeY from Acaryochloris marina (strain MBIC 11017).